The chain runs to 365 residues: Eukaryotic translation initiation factor 3 subunit H (365 aa).

The MPN domain occupies 11–160 (VKVDALVVMK…LRAFRLSSKF (150 aa)).

It belongs to the eIF-3 subunit H family. In terms of assembly, component of the eukaryotic translation initiation factor 3 (eIF-3) complex.

The protein localises to the cytoplasm. Component of the eukaryotic translation initiation factor 3 (eIF-3) complex, which is involved in protein synthesis of a specialized repertoire of mRNAs and, together with other initiation factors, stimulates binding of mRNA and methionyl-tRNAi to the 40S ribosome. The eIF-3 complex specifically targets and initiates translation of a subset of mRNAs involved in cell proliferation. The polypeptide is Eukaryotic translation initiation factor 3 subunit H (Aspergillus oryzae (strain ATCC 42149 / RIB 40) (Yellow koji mold)).